The primary structure comprises 158 residues: Ribosome maturation factor RimP (158 aa).

The protein belongs to the RimP family.

The protein resides in the cytoplasm. Its function is as follows. Required for maturation of 30S ribosomal subunits. This chain is Ribosome maturation factor RimP, found in Pseudomonas savastanoi pv. phaseolicola (strain 1448A / Race 6) (Pseudomonas syringae pv. phaseolicola (strain 1448A / Race 6)).